The sequence spans 103 residues: Mitochondrial import inner membrane translocase subunit TIM13 (103 aa).

The disordered stretch occupies residues 1-25; that stretch reads MALSSIFGGGSPSQQSNLPTSSASS. A compositionally biased stretch (polar residues) spans 12-25; it reads PSQQSNLPTSSASS. The Twin CX3C motif motif lies at 55–75; that stretch reads CFEKCLMAPYTSKQDTCVDQC. 2 disulfide bridges follow: Cys55–Cys75 and Cys59–Cys71.

This sequence belongs to the small Tim family. In terms of assembly, heterohexamer; composed of 3 copies of TIM8 and 3 copies of TIM13, named soluble 70 kDa complex. Associates with the TIM22 complex, whose core is composed of TIM22 and TIM54. Interacts with the transmembrane regions of multi-pass transmembrane proteins in transit.

The protein localises to the mitochondrion inner membrane. Its function is as follows. Mitochondrial intermembrane chaperone that participates in the import and insertion of some multi-pass transmembrane proteins into the mitochondrial inner membrane. Also required for the transfer of beta-barrel precursors from the TOM complex to the sorting and assembly machinery (SAM complex) of the outer membrane. Acts as a chaperone-like protein that protects the hydrophobic precursors from aggregation and guide them through the mitochondrial intermembrane space. The TIM8-TIM13 complex is non essential and only mediates the import of few proteins, while the predominant TIM9-TIM10 70 kDa complex is crucial and mediates the import of much more proteins. This is Mitochondrial import inner membrane translocase subunit TIM13 (TIM13) from Eremothecium gossypii (strain ATCC 10895 / CBS 109.51 / FGSC 9923 / NRRL Y-1056) (Yeast).